The sequence spans 387 residues: Phosphoglycerate kinase (387 aa).

Residues 21–23 (DLN), arginine 36, 59–62 (HLGR), arginine 113, and arginine 146 contribute to the substrate site. Residues lysine 197, glutamate 314, and 340 to 343 (GGDT) contribute to the ATP site.

It belongs to the phosphoglycerate kinase family. In terms of assembly, monomer.

It localises to the cytoplasm. The enzyme catalyses (2R)-3-phosphoglycerate + ATP = (2R)-3-phospho-glyceroyl phosphate + ADP. Its pathway is carbohydrate degradation; glycolysis; pyruvate from D-glyceraldehyde 3-phosphate: step 2/5. The sequence is that of Phosphoglycerate kinase from Pseudomonas putida (strain ATCC 47054 / DSM 6125 / CFBP 8728 / NCIMB 11950 / KT2440).